We begin with the raw amino-acid sequence, 292 residues long: Ribose import binding protein RbsB (292 aa).

Positions 1 to 23 (MKKLTALTSAVLLGLAVSSSASA) are cleaved as a signal peptide.

The protein belongs to the bacterial solute-binding protein 2 family. In terms of assembly, the complex is composed of an ATP-binding protein (RbsA), two transmembrane proteins (RbsC) and a solute-binding protein (RbsB).

It is found in the periplasm. In terms of biological role, part of the ABC transporter complex RbsABC involved in ribose import. Binds ribose. This chain is Ribose import binding protein RbsB (rbsB), found in Haemophilus influenzae (strain ATCC 51907 / DSM 11121 / KW20 / Rd).